A 37-amino-acid polypeptide reads, in one-letter code: Large ribosomal subunit protein bL36c (37 aa).

Belongs to the bacterial ribosomal protein bL36 family.

The protein localises to the plastid. It localises to the chloroplast. In Dioscorea elephantipes (Elephant's foot yam), this protein is Large ribosomal subunit protein bL36c.